A 258-amino-acid chain; its full sequence is Steroid 5-alpha-reductase DET2 (258 aa).

6 consecutive transmembrane segments (helical) span residues 8-28 (FHYCLLTLYIIALPTWISLYF), 49-69 (LAWFLMESPTLWLTFFLFPSG), 77-97 (SFLLISPFLFHYFNRTVLYPL), 109-129 (FPVSVAFMAFGFNLLNGYLQA), 144-164 (LFWWRFLAGLLIFVVGMWVNV), and 201-221 (IMEWFGWAVMTWSWVGFGFFL).

Belongs to the steroid 5-alpha reductase family. In terms of tissue distribution, accumulates in fibers (seed trichomes) during both their initiation and elongation phases. Also present in roots, hypocotyls, leaves, flowers and ovules, and barely in cotyledons.

Its subcellular location is the membrane. The enzyme catalyses a 3-oxo-5alpha-steroid + NADP(+) = a 3-oxo-Delta(4)-steroid + NADPH + H(+). It participates in plant hormone biosynthesis; brassinosteroid biosynthesis. Its function is as follows. Involved in a reduction step in the biosynthesis of the plant steroid, brassinolide (BL). Promotes cotton fibers (seed trichomes) initiation and elongation. This chain is Steroid 5-alpha-reductase DET2, found in Gossypium hirsutum (Upland cotton).